Here is a 340-residue protein sequence, read N- to C-terminus: 4-hydroxy-3-methylbut-2-enyl diphosphate reductase (340 aa).

C19 contributes to the [4Fe-4S] cluster binding site. (2E)-4-hydroxy-3-methylbut-2-enyl diphosphate-binding residues include H50 and H90. The dimethylallyl diphosphate site is built by H50 and H90. Isopentenyl diphosphate-binding residues include H50 and H90. C112 is a [4Fe-4S] cluster binding site. (2E)-4-hydroxy-3-methylbut-2-enyl diphosphate is bound at residue H141. Dimethylallyl diphosphate is bound at residue H141. H141 serves as a coordination point for isopentenyl diphosphate. Residue E143 is the Proton donor of the active site. Residue T190 participates in (2E)-4-hydroxy-3-methylbut-2-enyl diphosphate binding. A [4Fe-4S] cluster-binding site is contributed by C220. Residues S248, S249, N250, and S292 each coordinate (2E)-4-hydroxy-3-methylbut-2-enyl diphosphate. 4 residues coordinate dimethylallyl diphosphate: S248, S249, N250, and S292. Positions 248, 249, 250, and 292 each coordinate isopentenyl diphosphate.

The protein belongs to the IspH family. [4Fe-4S] cluster serves as cofactor.

The catalysed reaction is isopentenyl diphosphate + 2 oxidized [2Fe-2S]-[ferredoxin] + H2O = (2E)-4-hydroxy-3-methylbut-2-enyl diphosphate + 2 reduced [2Fe-2S]-[ferredoxin] + 2 H(+). It catalyses the reaction dimethylallyl diphosphate + 2 oxidized [2Fe-2S]-[ferredoxin] + H2O = (2E)-4-hydroxy-3-methylbut-2-enyl diphosphate + 2 reduced [2Fe-2S]-[ferredoxin] + 2 H(+). It participates in isoprenoid biosynthesis; dimethylallyl diphosphate biosynthesis; dimethylallyl diphosphate from (2E)-4-hydroxy-3-methylbutenyl diphosphate: step 1/1. It functions in the pathway isoprenoid biosynthesis; isopentenyl diphosphate biosynthesis via DXP pathway; isopentenyl diphosphate from 1-deoxy-D-xylulose 5-phosphate: step 6/6. Its function is as follows. Catalyzes the conversion of 1-hydroxy-2-methyl-2-(E)-butenyl 4-diphosphate (HMBPP) into a mixture of isopentenyl diphosphate (IPP) and dimethylallyl diphosphate (DMAPP). Acts in the terminal step of the DOXP/MEP pathway for isoprenoid precursor biosynthesis. This is 4-hydroxy-3-methylbut-2-enyl diphosphate reductase from Thermus thermophilus (strain ATCC BAA-163 / DSM 7039 / HB27).